The following is a 60-amino-acid chain: Rubredoxin 4 (60 aa).

Positions 4–55 (YKLYQCAQCGFEYDEAVGWPEDGIEPGTRWDDIPEDWSCPDCGAAKSDFFMV) constitute a Rubredoxin-like domain. Fe cation is bound by residues Cys-9, Cys-12, Cys-42, and Cys-45.

It belongs to the rubredoxin family. Fe(3+) is required as a cofactor.

Involved in the hydrocarbon hydroxylating system, which transfers electrons from NADH to rubredoxin reductase and then through rubredoxin to alkane 1 monooxygenase. This chain is Rubredoxin 4 (rubA4), found in Rhodococcus sp. (strain Q15).